Here is a 303-residue protein sequence, read N- to C-terminus: MADLSVNIGDLKLCNPVMTASGTFGYGKEFEDFVDLEKIGGIIVKGTTLHHREGNPYPRMAETPMGMLNAVGLQNKGVDYFVEHIYPQIRDIHTNMIVNVSGSAVEDYVKTAEIINDLDHIPAIELNISCPNVKQGGMAFGVSACGCSEVVKAVRNVYKKTLIVKLSPNVTDITEIARAAEASGADSVSLINTLLGMAVDAEKRRPVLSTITGGMSGAAVKPIALRMVWQVAKAVNIPVIGLGGIMGWKDAVEFMLAGATAIQIGTANFIDPAITVKVSEGINDYLERHGYTSVKDIIGALEV.

FMN contacts are provided by residues serine 21 and 45 to 46 (KG). Substrate-binding positions include lysine 45 and 69–73 (NAVGL). Residues asparagine 99 and asparagine 127 each contribute to the FMN site. Asparagine 127 lines the substrate pocket. Cysteine 130 acts as the Nucleophile in catalysis. Positions 165 and 191 each coordinate FMN. 192 to 193 (NT) is a binding site for substrate. FMN contacts are provided by residues glycine 217, 243-244 (GG), and 265-266 (GT).

Belongs to the dihydroorotate dehydrogenase family. Type 1 subfamily. As to quaternary structure, heterotetramer of 2 PyrK and 2 PyrD type B subunits. Requires FMN as cofactor.

It localises to the cytoplasm. It carries out the reaction (S)-dihydroorotate + NAD(+) = orotate + NADH + H(+). It participates in pyrimidine metabolism; UMP biosynthesis via de novo pathway; orotate from (S)-dihydroorotate (NAD(+) route): step 1/1. Its function is as follows. Catalyzes the conversion of dihydroorotate to orotate with NAD(+) as electron acceptor. This is Dihydroorotate dehydrogenase B (NAD(+)), catalytic subunit (pyrD) from Phocaeicola vulgatus (strain ATCC 8482 / DSM 1447 / JCM 5826 / CCUG 4940 / NBRC 14291 / NCTC 11154) (Bacteroides vulgatus).